The chain runs to 342 residues: tRNA dimethylallyltransferase (342 aa).

39–46 (GPTGSGKT) is an ATP binding site. 41 to 46 (TGSGKT) contacts substrate. Residues 64-67 (DSMQ) form an interaction with substrate tRNA region.

It belongs to the IPP transferase family. Monomer. The cofactor is Mg(2+).

It carries out the reaction adenosine(37) in tRNA + dimethylallyl diphosphate = N(6)-dimethylallyladenosine(37) in tRNA + diphosphate. Its function is as follows. Catalyzes the transfer of a dimethylallyl group onto the adenine at position 37 in tRNAs that read codons beginning with uridine, leading to the formation of N6-(dimethylallyl)adenosine (i(6)A). The polypeptide is tRNA dimethylallyltransferase (Chlamydia pneumoniae (Chlamydophila pneumoniae)).